An 843-amino-acid chain; its full sequence is Neuroligin-1 (843 aa).

A signal peptide spans 1–45; it reads MALPRCMWPNYVWRAMMACVVHRGSGAPLTLCLLGCLLQTFHVLS. Residues 46–697 lie on the Extracellular side of the membrane; it reads QKLDDVDPLV…DQRDYSTELS (652 aa). Asn109 carries N-linked (GlcNAc...) (complex) asparagine glycosylation. A disulfide bond links Cys117 and Cys153. Residues 167–190 form a disordered region; the sequence is LTKKHTDDLGDNDGAEDEDIRDSG. Residues 175-186 are compositionally biased toward acidic residues; that stretch reads LGDNDGAEDEDI. 2 N-linked (GlcNAc...) (complex) asparagine glycosylation sites follow: Asn303 and Asn343. Disulfide bonds link Cys342–Cys353 and Cys512–Cys546. Asn547 carries N-linked (GlcNAc...) asparagine glycosylation. The disordered stretch occupies residues 647–688; it reads TKVPSTDITLRPTRKNSTPVTSAFPTAKQDDPKQQPSPFSVD. Residues 661–670 show a composition bias toward polar residues; sequence KNSTPVTSAF. O-linked (GalNAc...) serine glycosylation is found at Ser683 and Ser686. The helical transmembrane segment at 698–718 threads the bilayer; the sequence is VTIAVGASLLFLNILAFAALY. Over 719 to 843 the chain is Cytoplasmic; the sequence is YKKDKRRHDV…HPHSHSTTRV (125 aa). Positions 822-843 are disordered; the sequence is GGQNNTLPHPHPHPHSHSTTRV. Over residues 831 to 843 the composition is skewed to basic residues; sequence PHPHPHSHSTTRV.

The protein belongs to the type-B carboxylesterase/lipase family. In terms of assembly, interacts with neurexins NRXN1, NRXN2 and NRXN3. Interaction with neurexins is mediated by heparan sulfate glycan modification on neurexin. Interacts (via its C-terminus) with DLG4/PSD-95 (via PDZ domain 3). Interacts with AIP1, GOPC and PDZRN3. Interacts with NLGN3. In terms of tissue distribution, brain and arteries (at protein level). Expressed in olfactory bulb. Detected in brain.

It localises to the cell membrane. The protein resides in the postsynaptic density. Its subcellular location is the synaptic cleft. The protein localises to the synaptic cell membrane. Functionally, cell surface protein involved in cell-cell-interactions via its interactions with neurexin family members. Plays a role in synapse function and synaptic signal transmission, and probably mediates its effects by recruiting and clustering other synaptic proteins. May promote the initial formation of synapses, but is not essential for this. In vitro, triggers the de novo formation of presynaptic structures. May be involved in specification of excitatory synapses. Required to maintain wakefulness quality and normal synchrony of cerebral cortex activity during wakefulness and sleep. The protein is involved in nervous system development. This is Neuroligin-1 (Nlgn1) from Mus musculus (Mouse).